We begin with the raw amino-acid sequence, 485 residues long: Glutamyl-tRNA(Gln) amidotransferase subunit A (485 aa).

Residues Lys-78 and Ser-153 each act as charge relay system in the active site. Ser-177 functions as the Acyl-ester intermediate in the catalytic mechanism.

Belongs to the amidase family. GatA subfamily. In terms of assembly, heterotrimer of A, B and C subunits.

It carries out the reaction L-glutamyl-tRNA(Gln) + L-glutamine + ATP + H2O = L-glutaminyl-tRNA(Gln) + L-glutamate + ADP + phosphate + H(+). Its function is as follows. Allows the formation of correctly charged Gln-tRNA(Gln) through the transamidation of misacylated Glu-tRNA(Gln) in organisms which lack glutaminyl-tRNA synthetase. The reaction takes place in the presence of glutamine and ATP through an activated gamma-phospho-Glu-tRNA(Gln). In Geobacter metallireducens (strain ATCC 53774 / DSM 7210 / GS-15), this protein is Glutamyl-tRNA(Gln) amidotransferase subunit A.